The sequence spans 391 residues: MASRGFAPLSGRQENIMVLGRADGLHALKPGQRVVLGVLTENDQHNRVFGQVSSKYVPALRDASTLDVSTSSATLGVHVVEPVIAQATKPTSFLLPSELLLVDDVVQDLGSGSCMDSSMQSLPEEAAYEDILCVPEYAEDIHRYLRECEVKYRPKPGYMRKQPDITNCMRVILVDWLVEVGEEYKLCSETLFLAVNYLDRFLSCMSVLRGKLQLVGTAAVLLAAKYEEVYPPEVDEFVYITDDTYTKKQLLRMEQHLLRVLAFDMTAPTVHQFLMQYTLEGHICARTVNLALYLSELSLLEVDPFVQYLPSKTAAAAYCLANYTLNGVLWPENLYAFTGYSLAVIIPCLMELHKLHLGAAGRPQQAIQEKYKGSKYCGVSLLEPVESLPLP.

This sequence belongs to the cyclin family. Cyclin AB subfamily. Interacts with the CDK1 and the CDK2 protein kinases to form a serine/threonine kinase holoenzyme complex. The cyclin subunit imparts substrate specificity to the complex.

Its subcellular location is the nucleus. May be involved in the control of the cell cycle at the G1/S (start) and G2/M (mitosis) transitions. This is Cyclin-A1 (ccna1) from Carassius auratus (Goldfish).